Here is a 236-residue protein sequence, read N- to C-terminus: 7-cyano-7-deazaguanine synthase (236 aa).

7 to 17 (CSGGLDSVSLA) provides a ligand contact to ATP. Positions 185, 193, 196, and 199 each coordinate Zn(2+).

This sequence belongs to the QueC family. Zn(2+) is required as a cofactor.

The catalysed reaction is 7-carboxy-7-deazaguanine + NH4(+) + ATP = 7-cyano-7-deazaguanine + ADP + phosphate + H2O + H(+). The protein operates within purine metabolism; 7-cyano-7-deazaguanine biosynthesis. Functionally, catalyzes the ATP-dependent conversion of 7-carboxy-7-deazaguanine (CDG) to 7-cyano-7-deazaguanine (preQ(0)). This is 7-cyano-7-deazaguanine synthase from Rhizobium etli (strain ATCC 51251 / DSM 11541 / JCM 21823 / NBRC 15573 / CFN 42).